The primary structure comprises 256 residues: uncharacterized protein (256 aa).

A signal peptide spans 1–24 (MIKRVNKLVLGISLLFLVISIAAG). A lipid anchor (N-palmitoyl cysteine) is attached at Cys25. Cys25 carries the S-diacylglycerol cysteine lipid modification.

The protein belongs to the staphylococcal tandem lipoprotein family.

It localises to the cell membrane. This is an uncharacterized protein from Staphylococcus aureus.